Consider the following 677-residue polypeptide: Methionine--tRNA ligase (677 aa).

Residues 15-25 carry the 'HIGH' region motif; it reads PYANGSIHLGH. Zn(2+) contacts are provided by Cys146, Cys149, Cys159, and Cys162. The short motif at 333–337 is the 'KMSKS' region element; the sequence is KMSKS. Residue Lys336 participates in ATP binding. The region spanning 575 to 677 is the tRNA-binding domain; that stretch reads DFAKVDLRVA…AGAKPGHQVK (103 aa).

It belongs to the class-I aminoacyl-tRNA synthetase family. MetG type 1 subfamily. Homodimer. The cofactor is Zn(2+).

The protein resides in the cytoplasm. The enzyme catalyses tRNA(Met) + L-methionine + ATP = L-methionyl-tRNA(Met) + AMP + diphosphate. Functionally, is required not only for elongation of protein synthesis but also for the initiation of all mRNA translation through initiator tRNA(fMet) aminoacylation. The chain is Methionine--tRNA ligase from Escherichia coli (strain ATCC 8739 / DSM 1576 / NBRC 3972 / NCIMB 8545 / WDCM 00012 / Crooks).